The primary structure comprises 20 residues: Non-specific lipid-transfer protein (20 aa).

Belongs to the plant LTP family.

Plant non-specific lipid-transfer proteins transfer phospholipids as well as galactolipids across membranes. May play a role in wax or cutin deposition in the cell walls of expanding epidermal cells and certain secretory tissues. The polypeptide is Non-specific lipid-transfer protein (Citrus sinensis (Sweet orange)).